Here is a 351-residue protein sequence, read N- to C-terminus: Nicotinate-nucleotide--dimethylbenzimidazole phosphoribosyltransferase (351 aa).

Residue glutamate 317 is the Proton acceptor of the active site.

Belongs to the CobT family.

It carries out the reaction 5,6-dimethylbenzimidazole + nicotinate beta-D-ribonucleotide = alpha-ribazole 5'-phosphate + nicotinate + H(+). It functions in the pathway nucleoside biosynthesis; alpha-ribazole biosynthesis; alpha-ribazole from 5,6-dimethylbenzimidazole: step 1/2. Its function is as follows. Catalyzes the synthesis of alpha-ribazole-5'-phosphate from nicotinate mononucleotide (NAMN) and 5,6-dimethylbenzimidazole (DMB). The protein is Nicotinate-nucleotide--dimethylbenzimidazole phosphoribosyltransferase of Pseudomonas putida (strain ATCC 700007 / DSM 6899 / JCM 31910 / BCRC 17059 / LMG 24140 / F1).